Consider the following 270-residue polypeptide: Putative phosphoenolpyruvate synthase regulatory protein (270 aa).

150–157 (GVSRCGKT) serves as a coordination point for ADP.

It belongs to the pyruvate, phosphate/water dikinase regulatory protein family. PSRP subfamily.

The enzyme catalyses [pyruvate, water dikinase] + ADP = [pyruvate, water dikinase]-phosphate + AMP + H(+). It catalyses the reaction [pyruvate, water dikinase]-phosphate + phosphate + H(+) = [pyruvate, water dikinase] + diphosphate. Functionally, bifunctional serine/threonine kinase and phosphorylase involved in the regulation of the phosphoenolpyruvate synthase (PEPS) by catalyzing its phosphorylation/dephosphorylation. In Shewanella denitrificans (strain OS217 / ATCC BAA-1090 / DSM 15013), this protein is Putative phosphoenolpyruvate synthase regulatory protein.